The chain runs to 326 residues: mRNA decay activator protein ZFP36 (326 aa).

Positions 1–15 are necessary for nuclear export; it reads MDLTAIYESLLSLSP. The segment at 1–100 is necessary and sufficient for the association with mRNA decay enzymes and mRNA decay activation; sequence MDLTAIYESL…PTSPTATSTT (100 aa). Necessary for localization of ARE-containing mRNAs to processing bodies (PBs) stretches follow at residues 1–174 and 100–326; these read MDLT…DLAA and TPSR…SVSE. A disordered region spans residues 13–66; sequence LSPDVPVPSDHGGTESSPGWGSSGPWSLSPSDSSPSGVTSRLPGRSTSLVEGRS. Residues 28–49 are compositionally biased toward low complexity; the sequence is SSPGWGSSGPWSLSPSDSSPSG. At Ser60 the chain carries Phosphoserine; by MAPKAPK2. At Ser66 the chain carries Phosphoserine. The stretch at 71–75 is one P-P-P-P-G repeat; it reads PPPPG. The disordered stretch occupies residues 78–102; that stretch reads PLAPRLGPELSPSPTSPTATSTTPS. Phosphoserine occurs at positions 88 and 90. Thr92 is modified (phosphothreonine). A Phosphoserine modification is found at Ser93. A necessary for nuclear localization region spans residues 95–168; the sequence is TATSTTPSRY…GSRCHFIHNP (74 aa). Residues 97–173 form a necessary for RNA-binding region; it reads TSTTPSRYKT…FIHNPSEDLA (77 aa). 2 C3H1-type zinc fingers span residues 103–131 and 141–169; these read RYKT…HGLG and KYKT…HNPS. A necessary for interaction with PABPN1 region spans residues 103-194; it reads RYKTELCRTF…ISFSGLPSGR (92 aa). Phosphoserine is present on Ser169. A necessary for mRNA decay activation region spans residues 174-326; that stretch reads APGHPPVLRQ…PIFNRISVSE (153 aa). 2 disordered regions span residues 175 to 245 and 273 to 292; these read PGHP…RRDP and SVQS…SSLG. The residue at position 186 (Ser186) is a Phosphoserine; by MAPKAPK2. Ser197 bears the Phosphoserine mark. The P-P-P-P-G repeat unit spans residues 198–202; sequence PPPPG. Residues 204-216 are compositionally biased toward low complexity; that stretch reads AGPSLSSSSFSPS. Ser218 bears the Phosphoserine mark. Residues 219 to 223 form a P-P-P-P-G repeat; it reads PPPPG. The residue at position 228 (Ser228) is a Phosphoserine; by MAPK1; in vitro. Residues Ser276, Ser296, and Ser323 each carry the phosphoserine modification. The interaction with CNOT1 stretch occupies residues 312–326; sequence APRRLPIFNRISVSE.

In terms of assembly, associates with cytoplasmic CCR4-NOT and PAN2-PAN3 deadenylase complexes to trigger ARE-containing mRNA deadenylation and decay processes. Part of a mRNA decay activation complex at least composed of poly(A)-specific exoribonucleases CNOT6, EXOSC2 and XRN1 and mRNA-decapping enzymes DCP1A and DCP2. Associates with the RNA exosome complex. Interacts (via phosphorylated form) with 14-3-3 proteins; these interactions promote exclusion of ZFP36 from cytoplasmic stress granules in response to arsenite treatment in a MAPKAPK2-dependent manner and does not prevent CCR4-NOT deadenylase complex recruitment or ZFP36-induced ARE-containing mRNA deadenylation and decay processes. Interacts with 14-3-3 proteins; these interactions occur in response to rapamycin in an Akt-dependent manner. Interacts with AGO2 and AGO4. Interacts (via C-terminus) with CNOT1; this interaction occurs in a RNA-independent manner and induces mRNA deadenylation. Interacts (via N-terminus) with CNOT6. Interacts with CNOT6L. Interacts (via C-terminus) with CNOT7; this interaction occurs in a RNA-independent manner, induces mRNA deadenylation and is inhibited in a phosphorylation MAPKAPK2-dependent manner. Interacts (via unphosphorylated form) with CNOT8; this interaction occurs in a RNA-independent manner and is inhibited in a phosphorylation MAPKAPK2-dependent manner. Interacts with DCP1A. Interacts (via N-terminus) with DCP2. Interacts with EDC3. Interacts (via N-terminus) with EXOSC2. Interacts with heat shock 70 kDa proteins. Interacts with KHSRP; this interaction increases upon cytokine-induced treatment. Interacts with MAP3K4; this interaction enhances the association with SH3KBP1/CIN85. Interacts with MAPKAPK2; this interaction occurs upon skeletal muscle satellite cell activation. Interacts with NCL. Interacts with NUP214; this interaction increases upon lipopolysaccharide (LPS) stimulation. Interacts with PABPC1; this interaction occurs in a RNA-dependent manner. Interacts (via hypophosphorylated form) with PABPN1 (via RRM domain and C-terminal arginine-rich region); this interaction occurs in the nucleus in a RNA-independent manner, decreases in presence of single-stranded poly(A) RNA-oligomer and in a p38 MAPK-dependent-manner and inhibits nuclear poly(A) tail synthesis. Interacts with PAN2. Interacts (via C3H1-type zinc finger domains) with PKM. Interacts (via C3H1-type zinc finger domains) with nuclear RNA poly(A) polymerase. Interacts with PPP2CA; this interaction occurs in LPS-stimulated cells and induces ZFP36 dephosphorylation, and hence may promote ARE-containing mRNAs decay. Interacts (via C-terminus) with PRR5L (via C-terminus); this interaction may accelerate ZFP36-mediated mRNA decay during stress. Interacts (via C-terminus) with SFN; this interaction occurs in a phosphorylation-dependent manner. Interacts (via extreme C-terminal region) with SH3KBP1/CIN85 (via SH3 domains); this interaction enhances MAP3K4-induced phosphorylation of ZFP36 at Ser-66 and Ser-93 and does not alter neither ZFP36 binding to ARE-containing transcripts nor TNF-alpha mRNA decay. Interacts with XRN1. Interacts (via C-terminus and Ser-186 phosphorylated form) with YWHAB; this interaction occurs in a p38/MAPKAPK2-dependent manner, increases cytoplasmic localization of ZFP36 and protects ZFP36 from Ser-186 dephosphorylation by serine/threonine phosphatase 2A, and hence may be crucial for stabilizing ARE-containing mRNAs. Interacts (via phosphorylated form) with YWHAE. Interacts (via C-terminus) with YWHAG; this interaction occurs in a phosphorylation-dependent manner. Interacts with YWHAH; this interaction occurs in a phosphorylation-dependent manner. Interacts with YWHAQ; this interaction occurs in a phosphorylation-dependent manner. Interacts with (via C-terminus) YWHAZ; this interaction occurs in a phosphorylation-dependent manner. Interacts (via P-P-P-P-G repeats) with GIGYF2; the interaction is direct. (Microbial infection) Interacts (via C-terminus) with HTLV-1 TAX (via C-terminus); this interaction inhibits HTLV-1 TAX to transactivate viral long terminal repeat (LTR) promoter. Phosphorylated. Phosphorylation at serine and/or threonine residues occurs in a p38 MAPK- and MAPKAPK2-dependent manner. Phosphorylated by MAPKAPK2 at Ser-60 and Ser-186; phosphorylation increases its stability and cytoplasmic localization, promotes binding to 14-3-3 adapter proteins and inhibits the recruitment of cytoplasmic CCR4-NOT and PAN2-PAN3 deadenylase complexes to the mRNA decay machinery, thereby inhibiting ZFP36-induced ARE-containing mRNA deadenylation and decay processes. Phosphorylation by MAPKAPK2 does not impair ARE-containing RNA-binding. Phosphorylated in a MAPKAPK2- and p38 MAPK-dependent manner upon skeletal muscle satellite cell activation; this phosphorylation inhibits ZFP36-mediated mRNA decay activity, and hence stabilizes MYOD1 mRNA. Phosphorylated by MAPK1 upon mitogen stimulation. Phosphorylated at Ser-66 and Ser-93; these phosphorylations increase in a SH3KBP1-dependent manner. Phosphorylated at serine and threonine residues in a pyruvate kinase PKM- and p38 MAPK-dependent manner. Phosphorylation at Ser-60 may participate in the PKM-mediated degradation of ZFP36 in a p38 MAPK-dependent manner. Dephosphorylated by serine/threonine phosphatase 2A at Ser-186. Post-translationally, ubiquitinated; pyruvate kinase (PKM)-dependent ubiquitination leads to proteasomal degradation through a p38 MAPK signaling pathway. In terms of tissue distribution, expressed in both basal and suprabasal epidermal layers. Expressed in epidermal keratinocytes. Expressed strongly in mature dendritic cells. Expressed in immature dendritic cells (at protein level).

The protein localises to the nucleus. The protein resides in the cytoplasm. It is found in the cytoplasmic granule. It localises to the P-body. Functionally, zinc-finger RNA-binding protein that destabilizes several cytoplasmic AU-rich element (ARE)-containing mRNA transcripts by promoting their poly(A) tail removal or deadenylation, and hence provide a mechanism for attenuating protein synthesis. Acts as an 3'-untranslated region (UTR) ARE mRNA-binding adapter protein to communicate signaling events to the mRNA decay machinery. Recruits deadenylase CNOT7 (and probably the CCR4-NOT complex) via association with CNOT1, and hence promotes ARE-mediated mRNA deadenylation. Functions also by recruiting components of the cytoplasmic RNA decay machinery to the bound ARE-containing mRNAs. Self regulates by destabilizing its own mRNA. Binds to 3'-UTR ARE of numerous mRNAs and of its own mRNA. Plays a role in anti-inflammatory responses; suppresses tumor necrosis factor (TNF)-alpha production by stimulating ARE-mediated TNF-alpha mRNA decay and several other inflammatory ARE-containing mRNAs in interferon (IFN)- and/or lipopolysaccharide (LPS)-induced macrophages. Also plays a role in the regulation of dendritic cell maturation at the post-transcriptional level, and hence operates as part of a negative feedback loop to limit the inflammatory response. Promotes ARE-mediated mRNA decay of hypoxia-inducible factor HIF1A mRNA during the response of endothelial cells to hypoxia. Positively regulates early adipogenesis of preadipocytes by promoting ARE-mediated mRNA decay of immediate early genes (IEGs). Negatively regulates hematopoietic/erythroid cell differentiation by promoting ARE-mediated mRNA decay of the transcription factor STAT5B mRNA. Plays a role in maintaining skeletal muscle satellite cell quiescence by promoting ARE-mediated mRNA decay of the myogenic determination factor MYOD1 mRNA. Associates also with and regulates the expression of non-ARE-containing target mRNAs at the post-transcriptional level, such as MHC class I mRNAs. Participates in association with argonaute RISC catalytic components in the ARE-mediated mRNA decay mechanism; assists microRNA (miRNA) targeting ARE-containing mRNAs. May also play a role in the regulation of cytoplasmic mRNA decapping; enhances decapping of ARE-containing RNAs, in vitro. Involved in the delivery of target ARE-mRNAs to processing bodies (PBs). In addition to its cytosolic mRNA-decay function, affects nuclear pre-mRNA processing. Negatively regulates nuclear poly(A)-binding protein PABPN1-stimulated polyadenylation activity on ARE-containing pre-mRNA during LPS-stimulated macrophages. Also involved in the regulation of stress granule (SG) and P-body (PB) formation and fusion. Plays a role in the regulation of keratinocyte proliferation, differentiation and apoptosis. Plays a role as a tumor suppressor by inhibiting cell proliferation in breast cancer cells. In terms of biological role, (Microbial infection) Negatively regulates HTLV-1 TAX-dependent transactivation of viral long terminal repeat (LTR) promoter. This chain is mRNA decay activator protein ZFP36, found in Homo sapiens (Human).